The primary structure comprises 529 residues: Cytochrome P450 monooxygenase fsoB (529 aa).

Residues 4 to 24 (WLLSLLIAGVVFAIFQLRTVG) form a helical membrane-spanning segment. Cys-436 serves as a coordination point for heme.

This sequence belongs to the cytochrome P450 family. Requires heme as cofactor.

The protein localises to the membrane. Functionally, cytochrome P450 monooxygenase; part of the gene cluster that mediates the biosynthesis of the enfumafungin-type antibiotic fuscoatroside. Four enzymes are sufficient to produce fuscoatroside: the terpene cyclase-glycosyl transferase fusion protein fsoAthe cytochrome P450 monoxygenases fsoD and fsoE, and the acetyltransferase fsoF; the cytochrome P450 monooxygenase fsoB and the glucose oxidase-like protein fsoC do not seem to play a role in biosynthesis of fuscoatroside. This is Cytochrome P450 monooxygenase fsoB from Humicola fuscoatra.